A 125-amino-acid chain; its full sequence is Small ribosomal subunit protein uS13 (125 aa).

Positions serine 94–lysine 125 are disordered.

Belongs to the universal ribosomal protein uS13 family. As to quaternary structure, part of the 30S ribosomal subunit. Forms a loose heterodimer with protein S19. Forms two bridges to the 50S subunit in the 70S ribosome.

Located at the top of the head of the 30S subunit, it contacts several helices of the 16S rRNA. In the 70S ribosome it contacts the 23S rRNA (bridge B1a) and protein L5 of the 50S subunit (bridge B1b), connecting the 2 subunits; these bridges are implicated in subunit movement. Contacts the tRNAs in the A and P-sites. The polypeptide is Small ribosomal subunit protein uS13 (Chlorobium chlorochromatii (strain CaD3)).